We begin with the raw amino-acid sequence, 340 residues long: Adenosine deaminase-like protein (340 aa).

Zn(2+)-binding residues include H14 and H16. N(6)-methyl-AMP is bound by residues H16, N18, H68, 100-103 (TTPK), and G173. H200 lines the Zn(2+) pocket. N(6)-methyl-AMP contacts are provided by E203, D278, and D279. Catalysis depends on E203, which acts as the Proton donor. D278 is a Zn(2+) binding site.

It belongs to the metallo-dependent hydrolases superfamily. Adenosine and AMP deaminases family. As to quaternary structure, monomer. It depends on Zn(2+) as a cofactor.

The enzyme catalyses N(6)-methyl-AMP + H2O + H(+) = IMP + methylamine. Its function is as follows. Catalyzes the hydrolysis of the free cytosolic methylated adenosine nucleotide N(6)-methyl-AMP (N6-mAMP) to produce inositol monophosphate (IMP) and methylamine. Is required for the catabolism of cytosolic N6-mAMP, which is derived from the degradation of mRNA containing N6-methylated adenine (m6A). The polypeptide is Adenosine deaminase-like protein (Drosophila pseudoobscura pseudoobscura (Fruit fly)).